The primary structure comprises 144 residues: uncharacterized protein (144 aa).

A run of 2 helical transmembrane segments spans residues 10–30 and 60–80; these read ILTRSSIIIGVIILVASGLGP and YVFLIYTVSLTKMVGTLAIAV.

It is found in the membrane. This is an uncharacterized protein from Saccharomyces cerevisiae (strain ATCC 204508 / S288c) (Baker's yeast).